The sequence spans 177 residues: ATP synthase subunit delta (177 aa).

The protein belongs to the ATPase delta chain family. In terms of assembly, F-type ATPases have 2 components, F(1) - the catalytic core - and F(0) - the membrane proton channel. F(1) has five subunits: alpha(3), beta(3), gamma(1), delta(1), epsilon(1). F(0) has three main subunits: a(1), b(2) and c(10-14). The alpha and beta chains form an alternating ring which encloses part of the gamma chain. F(1) is attached to F(0) by a central stalk formed by the gamma and epsilon chains, while a peripheral stalk is formed by the delta and b chains.

The protein localises to the cell inner membrane. Functionally, f(1)F(0) ATP synthase produces ATP from ADP in the presence of a proton or sodium gradient. F-type ATPases consist of two structural domains, F(1) containing the extramembraneous catalytic core and F(0) containing the membrane proton channel, linked together by a central stalk and a peripheral stalk. During catalysis, ATP synthesis in the catalytic domain of F(1) is coupled via a rotary mechanism of the central stalk subunits to proton translocation. Its function is as follows. This protein is part of the stalk that links CF(0) to CF(1). It either transmits conformational changes from CF(0) to CF(1) or is implicated in proton conduction. The protein is ATP synthase subunit delta of Klebsiella pneumoniae (strain 342).